Here is a 503-residue protein sequence, read N- to C-terminus: MQVLIVASLAFLAAWLVYSRWSDSRRRRGGGGSLPPGPPRLPIIGNMHQLGPNPHKSLAHLAKTYGPLMSLKLGNQLAVVASSPEMAREVLIKQGVALCRPFTPNAVCIHGHGEVSVLMLPATSNIWKRIRRIAREKLFSNPALQGTQDIRRERLRKLTDYAAGCSREGRAMNVGEATFTTMSNLMFATLFSIELTEYGASDAGANRKFREHVNAITTNMGVPNVADFFPIFAPLDPQGLRRKLTHHLGSLLELVQNLIDQRLQARDSSDYRKKKDFLDTLLDLSQGNEYDLSIKEIKHFFVDIIIAGSDTSAATAEWGMVELLLHPDKLEKLKAEMKSVVGEKSIVEESDIARLPYLRATVNEVFRLHPAAPLLAPHVAEEEARVNEYIIPKDTKVFVNVWAITRDPSIWKNPDSFEPERFLESDINFEGQHFELIPFGSGRRSCPGIPLASRMLHCMVGTLCHNFDWELEKGAESKQLQRQDVFGLALQKKVPLKAIPVKV.

A helical membrane pass occupies residues 2–22; the sequence is QVLIVASLAFLAAWLVYSRWS. Cysteine 446 provides a ligand contact to heme.

It belongs to the cytochrome P450 family. Heme serves as cofactor. As to expression, highly expressed in roots.

It localises to the membrane. It carries out the reaction 11-hydroxysugiol + reduced [NADPH--hemoprotein reductase] + O2 = 11,20-dihydroxysugiol + oxidized [NADPH--hemoprotein reductase] + H2O + H(+). The catalysed reaction is 11-hydroxyferruginol + reduced [NADPH--hemoprotein reductase] + O2 = 11,20-dihydroxyferruginol + oxidized [NADPH--hemoprotein reductase] + H2O + H(+). It participates in secondary metabolite biosynthesis; terpenoid biosynthesis. Functionally, monooxygenase that oxidizes 11-hydroxysugiol to produce 11,20-dihydroxysugiol. Can oxidize 11-hydroxyferruginol to produce 11,20-dihydroxyferruginol. These products are intermediates in tanshinone biosynthesis. The polypeptide is 11-hydroxysugiol 20-monooxygenase (Salvia miltiorrhiza (Chinese sage)).